We begin with the raw amino-acid sequence, 215 residues long: Ras-related protein Rab-5A (215 aa).

Residues Ser29, Ala30, Gly32, Lys33, Ser34, Ser35, His46, Glu47, Thr52, and Gly78 each contribute to the GTP site. Position 34 (Ser34) interacts with Mg(2+). Short sequence motifs (switch) lie at residues 44–56 (QFHEFQESTIGAA) and 77–93 (AGQERYHSLAPMYYRGA). A Mg(2+)-binding site is contributed by Thr52. The residue at position 84 (Ser84) is a Phosphoserine. GTP-binding residues include Asn133, Lys134, Asp136, Ala164, and Lys165. Residues 185-215 (EPQNPGINCTRGRGVDLTEPTQPTRSQCCSN) form a disordered region. Residues 203 to 215 (EPTQPTRSQCCSN) show a composition bias toward polar residues. 2 S-geranylgeranyl cysteine lipidation sites follow: Cys212 and Cys213.

This sequence belongs to the small GTPase superfamily. Rab family. In terms of assembly, interacts with GDI1; this promotes dissociation from membranes; phosphorylation at Ser-84 disrupts this interaction. Interacts with GDI2; phosphorylation at Ser-84 disrupts the interaction. Interacts with SGSM1 and SGSM3. Interacts with PIK3CB. Interacts with RIN1 and GAPVD1, which regulate its pathway, probably by acting as a GEF. Interacts with RINL. Interacts with ALS2CL, SUN2, ZFYVE20 and RUFY1. Interacts with RABEP1; one RABEP1 homodimer binds two RAB5A chains, but at opposite sides of the dimer. Interacts with OCRL and INPP5F. May be a component of a complex composed of RAB5A, DYN2 and PIK3C3. Does not interact with the BLOC-3 complex (heterodimer of HPS1 and HPS4). Interacts with CLN5. Interacts with APPL2. Interacts with F8A1/F8A2/F8A3. Found in a complex with F8A1/F8A2/F8A3, HTT and RAB5A; mediates the recruitment of HTT by RAB5A onto early endosomes. Interacts with ATP9A. Interacts with PPP1R21; mediates the recruitment of FERRY complex by RAB5A onto early endosomes. It depends on Mg(2+) as a cofactor. Phosphorylation of Ser-84 in the switch II region by LRRK2 prevents the association of RAB regulatory proteins, including RAB GDP dissociation inhibitors GDI1 and GDI2.

It localises to the cell membrane. The protein localises to the early endosome membrane. Its subcellular location is the melanosome. It is found in the cytoplasmic vesicle. The protein resides in the cell projection. It localises to the ruffle. The protein localises to the membrane. Its subcellular location is the cytoplasm. It is found in the cytosol. The protein resides in the phagosome membrane. It localises to the endosome membrane. The catalysed reaction is GTP + H2O = GDP + phosphate + H(+). Regulated by guanine nucleotide exchange factors (GEFs) including RINL, which promote the exchange of bound GDP for free GTP. Regulated by GTPase activating proteins (GAPs) which increase the GTP hydrolysis activity. Inhibited by GDP dissociation inhibitors (GDIs). Functionally, the small GTPases Rab are key regulators of intracellular membrane trafficking, from the formation of transport vesicles to their fusion with membranes. Rabs cycle between an inactive GDP-bound form and an active GTP-bound form that is able to recruit to membranes different sets of downstream effectors directly responsible for vesicle formation, movement, tethering and fusion. RAB5A is required for the fusion of plasma membranes and early endosomes. Contributes to the regulation of filopodia extension. Required for the exosomal release of SDCBP, CD63, PDCD6IP and syndecan. Regulates maturation of apoptotic cell-containing phagosomes, probably downstream of DYN2 and PIK3C3. The protein is Ras-related protein Rab-5A (RAB5A) of Sus scrofa (Pig).